The sequence spans 519 residues: 2-isopropylmalate synthase (519 aa).

A Pyruvate carboxyltransferase domain is found at 5–267 (VIIFDTTLRD…TTNVNPMEIS (263 aa)). The Mn(2+) site is built by aspartate 14, histidine 202, histidine 204, and asparagine 238. The interval 392 to 519 (RLESINVQSG…KEQLIHIDQV (128 aa)) is regulatory domain.

It belongs to the alpha-IPM synthase/homocitrate synthase family. LeuA type 1 subfamily. As to quaternary structure, homodimer. Requires Mn(2+) as cofactor.

Its subcellular location is the cytoplasm. The catalysed reaction is 3-methyl-2-oxobutanoate + acetyl-CoA + H2O = (2S)-2-isopropylmalate + CoA + H(+). Its pathway is amino-acid biosynthesis; L-leucine biosynthesis; L-leucine from 3-methyl-2-oxobutanoate: step 1/4. Functionally, catalyzes the condensation of the acetyl group of acetyl-CoA with 3-methyl-2-oxobutanoate (2-ketoisovalerate) to form 3-carboxy-3-hydroxy-4-methylpentanoate (2-isopropylmalate). The protein is 2-isopropylmalate synthase of Psychromonas ingrahamii (strain DSM 17664 / CCUG 51855 / 37).